The sequence spans 225 residues: Small ribosomal subunit protein uS5 (225 aa).

Positions leucine 57–valine 120 constitute an S5 DRBM domain.

The protein belongs to the universal ribosomal protein uS5 family. In terms of assembly, part of the 30S ribosomal subunit. Contacts protein S4.

In terms of biological role, with S4 and S12 plays an important role in translational accuracy. The protein is Small ribosomal subunit protein uS5 of Methanococcus maripaludis (strain DSM 14266 / JCM 13030 / NBRC 101832 / S2 / LL).